Here is an 87-residue protein sequence, read N- to C-terminus: Small ribosomal subunit protein bS21 (87 aa).

Over residues 35 to 52 the composition is skewed to basic and acidic residues; that stretch reads HYEKPSEKKAREKAEAVR. The interval 35 to 87 is disordered; that stretch reads HYEKPSEKKAREKAEAVRRARKLARKKLQREGLLPSKPKPAFGADRRPSAAAR. Residues 53-62 are compositionally biased toward basic residues; that stretch reads RARKLARKKL. Residues 78-87 show a composition bias toward basic and acidic residues; sequence ADRRPSAAAR.

This is Small ribosomal subunit protein bS21 from Rhodopseudomonas palustris (strain ATCC BAA-98 / CGA009).